The following is a 72-amino-acid chain: Brevinin-2SN3 (72 aa).

A signal peptide spans 1 to 22; that stretch reads MFTLKKPLLLLVFLGMISLSLC. The propeptide at 23-40 is removed in mature form; it reads QDERGADEDDGGEMTEEE. Cysteines 66 and 72 form a disulfide.

This sequence belongs to the frog skin active peptide (FSAP) family. Brevinin subfamily. In terms of tissue distribution, expressed by the skin glands.

It is found in the secreted. Antimicrobial peptide. Active against a variety of Gram-negative and Gram-positive bacterial strains. Active against fungus C.glabrata 090902 but not against C.albicans ATCC 10231. Shows hemolytic activity against human erythrocytes. This Sylvirana spinulosa (Fine-spined frog) protein is Brevinin-2SN3.